A 178-amino-acid polypeptide reads, in one-letter code: Chorion class high-cysteine HCB protein 13 (178 aa).

The N-terminal stretch at Met1 to Gly21 is a signal peptide. Residues Thr22–Phe46 are left arm. Residues Cys47 to Ser110 form a central domain region. The right arm (Gly-rich tandem repeats) stretch occupies residues Cys111–Cys178.

It belongs to the chorion protein family.

This protein is one of many from the eggshell of the silk moth. This is Chorion class high-cysteine HCB protein 13 from Bombyx mori (Silk moth).